The following is a 115-amino-acid chain: UPF0102 protein NGO_1987 (115 aa).

It belongs to the UPF0102 family.

In Neisseria gonorrhoeae (strain ATCC 700825 / FA 1090), this protein is UPF0102 protein NGO_1987.